Consider the following 158-residue polypeptide: Small ribosomal subunit protein uS15 (158 aa).

Over residues 1–10 the composition is skewed to basic residues; sequence MARMHTRRRG. Residues 1 to 66 are disordered; that stretch reads MARMHTRRRG…EGVKGTPIPD (66 aa). Residues 21–32 show a composition bias toward acidic residues; that stretch reads DPPEWSDIDADA. Positions 33–45 are enriched in basic and acidic residues; that stretch reads IEERVVELAEQGH.

It belongs to the universal ribosomal protein uS15 family. As to quaternary structure, part of the 30S ribosomal subunit.

The protein is Small ribosomal subunit protein uS15 of Haloquadratum walsbyi (strain DSM 16790 / HBSQ001).